Reading from the N-terminus, the 220-residue chain is Large ribosomal subunit protein uL16 (220 aa).

Belongs to the universal ribosomal protein uL16 family. In terms of assembly, component of the small ribosomal subunit. Mature ribosomes consist of a small (40S) and a large (60S) subunit. The 40S subunit contains about 33 different proteins and 1 molecule of RNA (18S). The 60S subunit contains about 49 different proteins and 3 molecules of RNA (25S, 5.8S and 5S).

In Euphorbia esula (Leafy spurge), this protein is Large ribosomal subunit protein uL16 (RPL10).